The primary structure comprises 638 residues: Neuroendocrine convertase 2 (638 aa).

The signal sequence occupies residues 1 to 25; it reads MKGGCVSQWKAAAGFLFCVMVFASA. A propeptide spanning residues 26–109 is cleaved from the precursor; it reads ERPVFTNHFL…QQEGFDRKKR (84 aa). A Peptidase S8 domain is found at 129–453; it reads QWYLINTGQA…YGVLDAGAMV (325 aa). Active-site charge relay system residues include aspartate 167 and histidine 208. 2 disulfide bridges follow: cysteine 225–cysteine 376 and cysteine 317–cysteine 347. Asparagine 375 carries N-linked (GlcNAc...) asparagine glycosylation. Serine 384 serves as the catalytic Charge relay system. In terms of domain architecture, P/Homo B spans 461-597; that stretch reads TVPERFHCVG…TLMLHGTQSA (137 aa). Residues cysteine 468 and cysteine 494 are joined by a disulfide bond. 2 N-linked (GlcNAc...) asparagine glycosylation sites follow: asparagine 514 and asparagine 524.

This sequence belongs to the peptidase S8 family. Furin subfamily.

Its subcellular location is the cytoplasmic vesicle. It localises to the secretory vesicle. The protein localises to the secreted. The catalysed reaction is Release of protein hormones and neuropeptides from their precursors, generally by hydrolysis of -Lys-Arg-|- bonds.. Serine endopeptidase which is involved in the processing of hormone and other protein precursors at sites comprised of pairs of basic amino acid residues. Responsible for the release of glucagon from proglucagon in pancreatic A cells. In Pongo abelii (Sumatran orangutan), this protein is Neuroendocrine convertase 2 (PCSK2).